The primary structure comprises 159 residues: Large ribosomal subunit protein uL11 (159 aa).

It belongs to the universal ribosomal protein uL11 family. In terms of assembly, part of the ribosomal stalk of the 50S ribosomal subunit. Interacts with L10 and the large rRNA to form the base of the stalk. L10 forms an elongated spine to which L12 dimers bind in a sequential fashion forming a multimeric L10(L12)X complex.

Functionally, forms part of the ribosomal stalk which helps the ribosome interact with GTP-bound translation factors. The polypeptide is Large ribosomal subunit protein uL11 (Nitrosopumilus maritimus (strain SCM1)).